The primary structure comprises 367 residues: Probable 7-methylxanthine methyltransferase 2 (367 aa).

Tyrosine 20 is an S-adenosyl-L-homocysteine binding site. Threonine 27 provides a ligand contact to theobromine. Positions 64, 69, 101, 102, 134, and 135 each coordinate S-adenosyl-L-homocysteine. The theobromine site is built by tyrosine 152, histidine 155, and tryptophan 156. Residues asparagine 172, aspartate 258, phenylalanine 260, and asparagine 261 each contribute to the Mg(2+) site. Position 313 (phenylalanine 313) interacts with theobromine.

Belongs to the methyltransferase superfamily. Type-7 methyltransferase family. Mg(2+) is required as a cofactor.

It carries out the reaction 7-methylxanthine + S-adenosyl-L-methionine = theobromine + S-adenosyl-L-homocysteine + H(+). It participates in alkaloid biosynthesis. Involved in the biosynthesis of theobromine. In Theobroma cacao (Cacao), this protein is Probable 7-methylxanthine methyltransferase 2.